The primary structure comprises 258 residues: MVLIRVLANLLILQLSYAQKSSELVIGGDECNINEHRSLALVYITSGFLCGGTLINQQWVLTAAHCDRGNMLIFFDVHSLKGLNKDVQSRVAKEKFICPNRKKDDEKDKDIMLIKLDSPVSNSEHIAPLSLPSNPPSVGSVCRIMGWGAITSPNVTLPGVPHCANINILDYEVCRKAYTGLPATSRTLCAGILEGGKDSCKGDSGGPLICNGQFQGIVSWGAHPCGQSLKPGVYTKVFDYTEWIQSILAGNADATCPP.

The first 18 residues, 1 to 18 (MVLIRVLANLLILQLSYA), serve as a signal peptide directing secretion. A propeptide spanning residues 19–24 (QKSSEL) is cleaved from the precursor. The region spanning 25–249 (VIGGDECNIN…YTEWIQSILA (225 aa)) is the Peptidase S1 domain. Cystine bridges form between Cys-31–Cys-163, Cys-50–Cys-66, Cys-98–Cys-256, Cys-142–Cys-210, Cys-174–Cys-189, and Cys-200–Cys-225. Residues His-65 and Asp-110 each act as charge relay system in the active site. A glycan (N-linked (GlcNAc...) asparagine) is linked at Asn-154. Ser-204 (charge relay system) is an active-site residue.

The protein belongs to the peptidase S1 family. Snake venom subfamily. In terms of assembly, monomer. Expressed by the venom gland.

Its subcellular location is the secreted. Functionally, snake venom serine protease that may act in the hemostasis system of the prey. The protein is Snake venom serine protease of Lachesis stenophrys (Central American bushmaster).